We begin with the raw amino-acid sequence, 98 residues long: ESAT-6-like protein EsxJ (98 aa).

The protein belongs to the WXG100 family. CFP-10 subfamily.

Its subcellular location is the secreted. This chain is ESAT-6-like protein EsxJ, found in Mycobacterium bovis (strain ATCC BAA-935 / AF2122/97).